Here is a 567-residue protein sequence, read N- to C-terminus: MSRISGDGGSRVSIPADLLQTIQNIREVTGKQHSDEDIFSVFKECFSDPHETTQKLLYLDTFHEVRSKRERKKENLVPNTQGRGRTGRKNFASSYTDASNGRSAAFKKQSGANHIIGGSGTASSAPNNARNDTKPSSIMAPNPISLPSGISNQKIQDAIISPVDKVDTEEQPLSKATSSSKDVVEPDKSKESSVSVAVSDSVVENDTQYAVVETFQIPQQSERVIKSEVAASKCKNESLLKSDVGERPHVTFPVHIQVAKMLENGLTFGSFDSNFVREASSDKFTIGCDDSNIESSHGTAASARKDISTFSQDKNHEISNSAAQNELTLQPDQTVLPEEGSEGDKVKNEVLPITDTHQAAKCDAPPISYPDQYSLAAAQQAMHLYRQQYSLNYFPYGPYFPPYYMPQPYIHQYLSPNGFQQQSYLPPGDDAPAPPGAELPLTHIKPGSDIGNSPPTTIPFSYTSYAFNHIPSAATINATHKEEKKENMYTTGPLSLANLQASPMYNLSLQGQPIAFPTMQAGIRGLYQQTQPILAPLSISARTEPIGPSHVTNQQPQAARTNLGNNY.

3 disordered regions span residues 70 to 150, 164 to 192, and 545 to 567; these read ERKK…PSGI, DKVD…SKES, and PIGP…GNNY. 2 stretches are compositionally biased toward polar residues: residues 91–102 and 121–136; these read FASSYTDASNGR and TASS…TKPS. Basic and acidic residues predominate over residues 182–191; it reads DVVEPDKSKE. A compositionally biased stretch (polar residues) spans 550-567; that stretch reads HVTNQQPQAARTNLGNNY.

The protein belongs to the GIP1 family. As to quaternary structure, monomer, homodimer, homooligomer. Under non-reducing conditions, predominantly present in high molecular weight forms, but predominates in low molecular weight monomers under reducing conditions. Interacts with BZIP16, BZIP68 and GBF1. Interacts with LBD18. Expressed in roots, leaves, stems and flowers.

It is found in the nucleus. Plant specific protein that enhances G-box-binding factor (GBF) DNA binding activity. May function as a nuclear chaperone or lever and regulate the multimeric state of GBFs. May contribute to bZIP-mediated gene regulation. Is able to refold denatured rhodanese in vitro. Reduces DNA-binding activity of BZIP16, BZIP68 and GBF1 under non-reducing conditions through direct physical interaction. Acts as a negative co-regulator in red and blue light-mediated hypocotyl elongation. Functions to promote hypocotyl elongation during the early stages of seedling development by regulating the repression effect by BZIP16 and the activation effect by BZIP68 and GBF1 on LHCB2.4 expression. Enhances transcriptional activity of LBD18 in the EXP14 promoter. May act as a transcriptional coactivator of LBD18. This chain is GBF-interacting protein 1, found in Arabidopsis thaliana (Mouse-ear cress).